Reading from the N-terminus, the 173-residue chain is Putative 4-hydroxy-4-methyl-2-oxoglutarate aldolase (173 aa).

Substrate is bound by residues Gly-89–Leu-92 and Arg-111. Position 112 (Asp-112) interacts with a divalent metal cation.

The protein belongs to the class II aldolase/RraA-like family. Homotrimer. A divalent metal cation is required as a cofactor.

The enzyme catalyses 4-hydroxy-4-methyl-2-oxoglutarate = 2 pyruvate. It catalyses the reaction oxaloacetate + H(+) = pyruvate + CO2. Its function is as follows. Catalyzes the aldol cleavage of 4-hydroxy-4-methyl-2-oxoglutarate (HMG) into 2 molecules of pyruvate. Also contains a secondary oxaloacetate (OAA) decarboxylase activity due to the common pyruvate enolate transition state formed following C-C bond cleavage in the retro-aldol and decarboxylation reactions. In Albidiferax ferrireducens (strain ATCC BAA-621 / DSM 15236 / T118) (Rhodoferax ferrireducens), this protein is Putative 4-hydroxy-4-methyl-2-oxoglutarate aldolase.